The following is a 235-amino-acid chain: Serine protease SplA (235 aa).

Residues 1–35 (MNKNVMIKGLTALTILTSLGFAENISDQPHSIAKA) form the signal peptide. Catalysis depends on charge relay system residues histidine 74, aspartate 113, and serine 189.

The protein belongs to the peptidase S1B family.

The protein localises to the secreted. This Staphylococcus aureus protein is Serine protease SplA (splA).